A 178-amino-acid chain; its full sequence is PRA1 family protein 2 (178 aa).

Topologically, residues 1–41 (MSEVRLPPLRALDDFVLGSARLVAPDPCDPQRWCHRVINNL) are cytoplasmic. Residues 42 to 62 (LYYQTNYLICFGLGLALAGYV) traverse the membrane as a helical segment. Over 63–64 (RP) the chain is Extracellular. The chain crosses the membrane as a helical span at residues 65–85 (LHTLLSALVVAVALGMLVCAA). The Cytoplasmic segment spans residues 86-96 (ENRAAVRRCRR). The helical transmembrane segment at 97 to 119 (SHPAACLAAVLAVGFLVLWAAGG) threads the bilayer. Topologically, residues 120 to 122 (AGT) are extracellular. Residues 123 to 140 (FLLSIAGPVLLILVHASL) form a helical membrane-spanning segment. Residues 141–178 (RLRNLKNKIENKIESIGLKRTPMGLLLEALGQEQEAGS) are Cytoplasmic-facing.

It belongs to the PRA1 family. Interacts with CCR5 and GDE1.

The protein resides in the endosome membrane. Its function is as follows. May be involved in ER/Golgi transport and vesicular traffic. Plays a proapoptotic role in cerulenin-induced neuroblastoma apoptosis. The sequence is that of PRA1 family protein 2 (PRAF2) from Bos taurus (Bovine).